We begin with the raw amino-acid sequence, 802 residues long: Acetyl-CoA decarbonylase/synthase complex subunit alpha 1 (802 aa).

[4Fe-4S] cluster is bound by residues cysteine 68, cysteine 71, cysteine 76, and cysteine 86. Histidine 109 contacts CO. [Ni-4Fe-4S] cluster-binding residues include histidine 243, cysteine 271, and cysteine 310. 2 consecutive 4Fe-4S ferredoxin-type domains span residues 395 to 424 (DEAL…VDQG) and 435 to 464 (SKLA…INVI). The [4Fe-4S] cluster site is built by cysteine 405, cysteine 408, cysteine 411, cysteine 415, cysteine 444, cysteine 447, cysteine 450, and cysteine 454. Residues cysteine 512, cysteine 541, and cysteine 576 each contribute to the [Ni-4Fe-4S] cluster site.

The protein belongs to the Ni-containing carbon monoxide dehydrogenase family. Heterotetramer of two alpha and two epsilon subunits. The ACDS complex is made up of alpha, epsilon, beta, gamma and delta subunits with a probable stoichiometry of (alpha(2)epsilon(2))(4)-beta(8)-(gamma(1)delta(1))(8). [4Fe-4S] cluster is required as a cofactor. The cofactor is [Ni-4Fe-4S] cluster.

It carries out the reaction CO + 2 oxidized [2Fe-2S]-[ferredoxin] + H2O = 2 reduced [2Fe-2S]-[ferredoxin] + CO2 + 2 H(+). Part of the ACDS complex that catalyzes the reversible cleavage of acetyl-CoA, allowing autotrophic growth from CO(2). The alpha-epsilon subcomponent functions as a carbon monoxide dehydrogenase. The polypeptide is Acetyl-CoA decarbonylase/synthase complex subunit alpha 1 (Archaeoglobus fulgidus (strain ATCC 49558 / DSM 4304 / JCM 9628 / NBRC 100126 / VC-16)).